The sequence spans 252 residues: Imidazole glycerol phosphate synthase subunit HisF (252 aa).

Residues D11 and D130 contribute to the active site.

The protein belongs to the HisA/HisF family. As to quaternary structure, heterodimer of HisH and HisF.

It is found in the cytoplasm. The enzyme catalyses 5-[(5-phospho-1-deoxy-D-ribulos-1-ylimino)methylamino]-1-(5-phospho-beta-D-ribosyl)imidazole-4-carboxamide + L-glutamine = D-erythro-1-(imidazol-4-yl)glycerol 3-phosphate + 5-amino-1-(5-phospho-beta-D-ribosyl)imidazole-4-carboxamide + L-glutamate + H(+). The protein operates within amino-acid biosynthesis; L-histidine biosynthesis; L-histidine from 5-phospho-alpha-D-ribose 1-diphosphate: step 5/9. Functionally, IGPS catalyzes the conversion of PRFAR and glutamine to IGP, AICAR and glutamate. The HisF subunit catalyzes the cyclization activity that produces IGP and AICAR from PRFAR using the ammonia provided by the HisH subunit. This chain is Imidazole glycerol phosphate synthase subunit HisF, found in Bacillus pumilus (strain SAFR-032).